A 332-amino-acid chain; its full sequence is UPF0194 membrane protein YbhG (332 aa).

The signal sequence occupies residues 1–26 (MMKKPVVIELAVVVLAAVVAGGYWWY). Positions 108-209 (EEIAQAAAAV…LNLQDSTLIA (102 aa)) form a coiled coil.

Belongs to the UPF0194 family.

The protein resides in the periplasm. This is UPF0194 membrane protein YbhG (ybhG) from Shigella sonnei (strain Ss046).